A 211-amino-acid chain; its full sequence is Probable GTP-binding protein EngB (211 aa).

Residues 13 to 188 (SGYEIAFAGR…ASVMAGRLHF (176 aa)) form the EngB-type G domain. GTP-binding positions include 21 to 28 (GRSNAGKS), 48 to 52 (GRTQM), 67 to 70 (DLPG), 134 to 137 (TKAD), and 167 to 169 (FSS). Mg(2+) contacts are provided by serine 28 and threonine 50.

Belongs to the TRAFAC class TrmE-Era-EngA-EngB-Septin-like GTPase superfamily. EngB GTPase family. Mg(2+) is required as a cofactor.

Its function is as follows. Necessary for normal cell division and for the maintenance of normal septation. The sequence is that of Probable GTP-binding protein EngB from Acinetobacter baumannii (strain ATCC 17978 / DSM 105126 / CIP 53.77 / LMG 1025 / NCDC KC755 / 5377).